We begin with the raw amino-acid sequence, 220 residues long: Large ribosomal subunit protein bL25 (220 aa).

It belongs to the bacterial ribosomal protein bL25 family. CTC subfamily. As to quaternary structure, part of the 50S ribosomal subunit; part of the 5S rRNA/L5/L18/L25 subcomplex. Contacts the 5S rRNA. Binds to the 5S rRNA independently of L5 and L18.

Functionally, this is one of the proteins that binds to the 5S RNA in the ribosome where it forms part of the central protuberance. The polypeptide is Large ribosomal subunit protein bL25 (Zymomonas mobilis subsp. mobilis (strain ATCC 31821 / ZM4 / CP4)).